We begin with the raw amino-acid sequence, 351 residues long: Phospho-N-acetylmuramoyl-pentapeptide-transferase (351 aa).

The next 10 membrane-spanning stretches (helical) occupy residues M17–L37, G62–W82, I85–F105, F124–G144, I161–S181, G190–T210, L230–Y250, I254–I274, I279–V299, and Q328–I348.

This sequence belongs to the glycosyltransferase 4 family. MraY subfamily. Mg(2+) is required as a cofactor.

The protein resides in the cell inner membrane. It carries out the reaction UDP-N-acetyl-alpha-D-muramoyl-L-alanyl-gamma-D-glutamyl-meso-2,6-diaminopimeloyl-D-alanyl-D-alanine + di-trans,octa-cis-undecaprenyl phosphate = di-trans,octa-cis-undecaprenyl diphospho-N-acetyl-alpha-D-muramoyl-L-alanyl-D-glutamyl-meso-2,6-diaminopimeloyl-D-alanyl-D-alanine + UMP. It functions in the pathway cell wall biogenesis; peptidoglycan biosynthesis. Functionally, catalyzes the initial step of the lipid cycle reactions in the biosynthesis of the cell wall peptidoglycan: transfers peptidoglycan precursor phospho-MurNAc-pentapeptide from UDP-MurNAc-pentapeptide onto the lipid carrier undecaprenyl phosphate, yielding undecaprenyl-pyrophosphoryl-MurNAc-pentapeptide, known as lipid I. This Borrelia garinii subsp. bavariensis (strain ATCC BAA-2496 / DSM 23469 / PBi) (Borreliella bavariensis) protein is Phospho-N-acetylmuramoyl-pentapeptide-transferase.